The sequence spans 343 residues: Protease inhibitor Egf1.5a (343 aa).

The N-terminal stretch at 1-28 is a signal peptide; it reads MYIDTGIMSNNIFLFAFFALVGLTRIEA. Positions 52 to 104 constitute a TIL domain; the sequence is CRENEHYNSTRIECEDECNDRNNKLCYRFQQFCWCNEGYIRNSSHICVKLEDC.

The protein belongs to the polydnaviridae EGF-like motif protein family. As to quaternary structure, interacts with host PAP1, PAP3 and SPH2.

In terms of biological role, counteracts the host humoral immune response by inhibiting the processing and the amidolytic activity of host PAP1 and PAP3. Thereby, melanization of host hemolymph, normally producing several reactive intermediates toxic for viruses, is deregulated and proper immune response cannot occur. The polypeptide is Protease inhibitor Egf1.5a (O1) (Microplitis demolitor bracovirus (isolate Webb) (MdBV)).